The sequence spans 455 residues: Argininosuccinate lyase (455 aa).

This sequence belongs to the lyase 1 family. Argininosuccinate lyase subfamily.

It is found in the cytoplasm. It catalyses the reaction 2-(N(omega)-L-arginino)succinate = fumarate + L-arginine. The protein operates within amino-acid biosynthesis; L-arginine biosynthesis; L-arginine from L-ornithine and carbamoyl phosphate: step 3/3. This chain is Argininosuccinate lyase, found in Shewanella baltica (strain OS195).